A 484-amino-acid polypeptide reads, in one-letter code: Glutamyl-tRNA(Gln) amidotransferase subunit A (484 aa).

Residues K76 and S151 each act as charge relay system in the active site. The active-site Acyl-ester intermediate is S175.

This sequence belongs to the amidase family. GatA subfamily. Heterotrimer of A, B and C subunits.

The catalysed reaction is L-glutamyl-tRNA(Gln) + L-glutamine + ATP + H2O = L-glutaminyl-tRNA(Gln) + L-glutamate + ADP + phosphate + H(+). In terms of biological role, allows the formation of correctly charged Gln-tRNA(Gln) through the transamidation of misacylated Glu-tRNA(Gln) in organisms which lack glutaminyl-tRNA synthetase. The reaction takes place in the presence of glutamine and ATP through an activated gamma-phospho-Glu-tRNA(Gln). The polypeptide is Glutamyl-tRNA(Gln) amidotransferase subunit A (Alkalilimnicola ehrlichii (strain ATCC BAA-1101 / DSM 17681 / MLHE-1)).